Consider the following 106-residue polypeptide: MAEEYHQLKITIFTDKGRSTISGFEYPQPILPYPAPYTFRFFHYDIEGPNLTNKEFKVKTGKIEYKGEEFDIPPSSKGSWRREDNLFDLISVTIYPSRQPKKVFHY.

Belongs to the csb family.

This is an uncharacterized protein from Dictyostelium discoideum (Social amoeba).